The chain runs to 136 residues: Cystatin-2 (136 aa).

A signal peptide spans 1 to 24 (MALLRGFLVCSLLLLSCICKEALG). The Cystatin domain maps to 29–124 (GGLENASPEE…CTFEVYNIPW (96 aa)). The Secondary area of contact signature appears at 73 to 77 (QIVSG). 2 cysteine pairs are disulfide-bonded: Cys91-Cys101 and Cys115-Cys135.

This sequence belongs to the cystatin family. Expressed by the venom gland.

The protein localises to the secreted. Its function is as follows. Inhibits various C1 cysteine proteases including cathepsin L, papain and cathepsin B. This protein has no toxic activity and its function in the venom is unknown. It may play a role as housekeeping or regulatory protein. The sequence is that of Cystatin-2 from Crotalus adamanteus (Eastern diamondback rattlesnake).